The chain runs to 108 residues: uncharacterized protein (108 aa).

An N-terminal signal peptide occupies residues 1 to 22; it reads MMIKQCVICLSLLVFGTTAAHA.

This is an uncharacterized protein from Bacillus subtilis (strain 168).